Consider the following 171-residue polypeptide: Translation initiation factor IF-3 (171 aa).

It belongs to the IF-3 family. As to quaternary structure, monomer.

It is found in the cytoplasm. In terms of biological role, IF-3 binds to the 30S ribosomal subunit and shifts the equilibrium between 70S ribosomes and their 50S and 30S subunits in favor of the free subunits, thus enhancing the availability of 30S subunits on which protein synthesis initiation begins. This Listeria innocua serovar 6a (strain ATCC BAA-680 / CLIP 11262) protein is Translation initiation factor IF-3.